Consider the following 87-residue polypeptide: UPF0250 protein SG0794 (87 aa).

This sequence belongs to the UPF0250 family.

This Sodalis glossinidius (strain morsitans) protein is UPF0250 protein SG0794.